We begin with the raw amino-acid sequence, 901 residues long: Protein translocase subunit SecA (901 aa).

Residues Gln85, Gly103–Thr107, and Asp510 contribute to the ATP site. The disordered stretch occupies residues Arg848 to Gln901. Residues Ile849–Ser866 show a composition bias toward polar residues. The Zn(2+) site is built by Cys882, Cys884, Cys893, and His894. The span at Lys888–Gln901 shows a compositional bias: basic residues.

The protein belongs to the SecA family. In terms of assembly, monomer and homodimer. Part of the essential Sec protein translocation apparatus which comprises SecA, SecYEG and auxiliary proteins SecDF-YajC and YidC. Forms a complex with SecB. Zn(2+) is required as a cofactor.

The protein resides in the cell inner membrane. Its subcellular location is the cytoplasm. The enzyme catalyses ATP + H2O + cellular proteinSide 1 = ADP + phosphate + cellular proteinSide 2.. Functionally, part of the Sec protein translocase complex. Interacts with the SecYEG preprotein conducting channel. Has a central role in coupling the hydrolysis of ATP to the transfer of proteins into and across the cell membrane, serving both as a receptor for the preprotein-SecB complex and as an ATP-driven molecular motor driving the stepwise translocation of polypeptide chains across the membrane. The polypeptide is Protein translocase subunit SecA (Haemophilus influenzae (strain ATCC 51907 / DSM 11121 / KW20 / Rd)).